The primary structure comprises 580 residues: Peptide transporter PTR_B (580 aa).

A compositionally biased stretch (basic and acidic residues) spans 1–30; sequence MSTEKLQNDDKVVDEKYVDADEHSLVRSQD. Positions 1–45 are disordered; the sequence is MSTEKLQNDDKVVDEKYVDADEHSLVRSQDESFPQTEEGGEPTDH. The chain crosses the membrane as a helical span at residues 57 to 78; it reads IPMSCWLVAIVELSERFTYYGL. N101 is a glycosylation site (N-linked (GlcNAc...) asparagine). The next 11 membrane-spanning stretches (helical) occupy residues 107–127, 134–154, 163–183, 219–239, 249–269, 326–346, 370–390, 402–422, 449–469, 484–504, and 513–533; these read ALSY…AWIA, YFTI…LFIT, TTSL…TGGI, VSNV…SVIA, FWAA…ALVL, ALYA…YGQM, INSI…YPFI, IFWG…LQHF, IALQ…ASIT, SFIM…GIAL, and MVWT…IFWF.

The protein belongs to the major facilitator superfamily. Proton-dependent oligopeptide transporter (POT/PTR) (TC 2.A.17) family.

Its subcellular location is the cell membrane. It carries out the reaction a dipeptide(out) + H(+)(out) = a dipeptide(in) + H(+)(in). The catalysed reaction is an L-amino acid tripeptide(out) + H(+)(out) = an L-amino acid tripeptide(in) + H(+)(in). Its function is as follows. Peptide transporter that exploits the inwardly directed proton motive force to facilitate the cellular uptake of di/tripeptides. Shows strong uptake specificity towards the dipeptides Tyr-Phe and Gly-His, when compared to PTR_A and PTR_C. This is Peptide transporter PTR_B from Candidozyma auris (Yeast).